The following is a 121-amino-acid chain: Large ribosomal subunit protein bL12 (121 aa).

The protein belongs to the bacterial ribosomal protein bL12 family. In terms of assembly, homodimer. Part of the ribosomal stalk of the 50S ribosomal subunit. Forms a multimeric L10(L12)X complex, where L10 forms an elongated spine to which 2 to 4 L12 dimers bind in a sequential fashion. Binds GTP-bound translation factors.

Its function is as follows. Forms part of the ribosomal stalk which helps the ribosome interact with GTP-bound translation factors. Is thus essential for accurate translation. The chain is Large ribosomal subunit protein bL12 from Clostridium perfringens (strain ATCC 13124 / DSM 756 / JCM 1290 / NCIMB 6125 / NCTC 8237 / Type A).